The primary structure comprises 239 residues: Serine protease SplD (239 aa).

Positions 1–36 (MNKNIIIKSIAALTILTSITGVGTTVVDGIQQTAKA) are cleaved as a signal peptide. Catalysis depends on charge relay system residues His75, Asp114, and Ser192.

Belongs to the peptidase S1B family.

It localises to the secreted. The protein is Serine protease SplD (splD) of Staphylococcus aureus (strain COL).